A 614-amino-acid chain; its full sequence is UvrABC system protein C (614 aa).

One can recognise a GIY-YIG domain in the interval 14–91 (TSPGCYIHKD…IKENKPKYNI (78 aa)). The UVR domain maps to 196 to 231 (DKIIDDLKSKMAVAAQSMEFERAAEYRDLIQAIGTL). The disordered stretch occupies residues 595–614 (LPQVAEERVDYQTEGNHNEP). Residues 599 to 614 (AEERVDYQTEGNHNEP) show a composition bias toward basic and acidic residues.

This sequence belongs to the UvrC family. In terms of assembly, interacts with UvrB in an incision complex.

The protein localises to the cytoplasm. Its function is as follows. The UvrABC repair system catalyzes the recognition and processing of DNA lesions. UvrC both incises the 5' and 3' sides of the lesion. The N-terminal half is responsible for the 3' incision and the C-terminal half is responsible for the 5' incision. This Streptococcus pneumoniae serotype 4 (strain ATCC BAA-334 / TIGR4) protein is UvrABC system protein C.